Consider the following 232-residue polypeptide: Lipopolysaccharide core heptose(II) kinase WaaY (232 aa).

The protein belongs to the protein kinase superfamily. RfaY/WaaY family.

The enzyme catalyses alpha-D-Glc-(1-&gt;3)-[L-alpha-D-Hep-(1-&gt;7)]-L-alpha-D-Hep-(1-&gt;3)-4-O-PO3(2-)-L-alpha-D-Hep-(1-&gt;5)-[alpha-Kdo-(2-&gt;4)]-alpha-Kdo-(2-&gt;6)-lipid A + ATP = alpha-D-Glc-(1-&gt;3)-[L-alpha-D-Hep-(1-&gt;7)]-4-O-PO3(2-)-L-alpha-D-Hep-(1-&gt;3)-4-O-PO3(2-)-L-alpha-D-Hep-(1-&gt;5)-[alpha-Kdo-(2-&gt;4)]-alpha-Kdo-(2-&gt;6)-lipid A + ADP + H(+). It participates in bacterial outer membrane biogenesis; LPS core biosynthesis. Its function is as follows. Kinase involved in the biosynthesis of the core oligosaccharide region of lipopolysaccharide (LPS). Catalyzes the phosphorylation of the second heptose unit (HepII) of the inner core. This Escherichia coli (strain K12) protein is Lipopolysaccharide core heptose(II) kinase WaaY.